The following is a 433-amino-acid chain: Elongation factor 1-alpha (433 aa).

The 223-residue stretch at 5 to 227 folds into the tr-type G domain; sequence KPHLNLVVIG…AFDFFKEPPR (223 aa). Residues 14–21 form a G1 region; the sequence is GHIDHGKS. GTP is bound at residue 14–21; the sequence is GHIDHGKS. Ser-21 contacts Mg(2+). The G2 stretch occupies residues 70–74; sequence GITID. Positions 91–94 are G3; sequence DAPG. Residues 91 to 95 and 153 to 156 each bind GTP; these read DAPGH and NKMD. The segment at 153–156 is G4; the sequence is NKMD. Positions 192-194 are G5; sequence SAW.

It belongs to the TRAFAC class translation factor GTPase superfamily. Classic translation factor GTPase family. EF-Tu/EF-1A subfamily.

It is found in the cytoplasm. The enzyme catalyses GTP + H2O = GDP + phosphate + H(+). Functionally, GTP hydrolase that promotes the GTP-dependent binding of aminoacyl-tRNA to the A-site of ribosomes during protein biosynthesis. The polypeptide is Elongation factor 1-alpha (Thermofilum pendens (strain DSM 2475 / Hrk 5)).